We begin with the raw amino-acid sequence, 430 residues long: Serine hydroxymethyltransferase (430 aa).

(6S)-5,6,7,8-tetrahydrofolate contacts are provided by residues Leu-123 and 127–129; that span reads GHL. Lys-232 bears the N6-(pyridoxal phosphate)lysine mark. Glu-248 serves as a coordination point for (6S)-5,6,7,8-tetrahydrofolate.

Belongs to the SHMT family. As to quaternary structure, homodimer. Requires pyridoxal 5'-phosphate as cofactor.

It localises to the cytoplasm. It carries out the reaction (6R)-5,10-methylene-5,6,7,8-tetrahydrofolate + glycine + H2O = (6S)-5,6,7,8-tetrahydrofolate + L-serine. It functions in the pathway one-carbon metabolism; tetrahydrofolate interconversion. Its pathway is amino-acid biosynthesis; glycine biosynthesis; glycine from L-serine: step 1/1. Catalyzes the reversible interconversion of serine and glycine with tetrahydrofolate (THF) serving as the one-carbon carrier. This reaction serves as the major source of one-carbon groups required for the biosynthesis of purines, thymidylate, methionine, and other important biomolecules. Also exhibits THF-independent aldolase activity toward beta-hydroxyamino acids, producing glycine and aldehydes, via a retro-aldol mechanism. The polypeptide is Serine hydroxymethyltransferase (Anaplasma marginale (strain St. Maries)).